We begin with the raw amino-acid sequence, 97 residues long: Mitochondrial import inner membrane translocase subunit Tim8 A (97 aa).

The short motif at 43 to 66 is the Twin CX3C motif element; the sequence is CWEKCMDKPGPKLDSRAEACFVNC. Disulfide bonds link cysteine 43-cysteine 66 and cysteine 47-cysteine 62. Phosphoserine is present on residues serine 57, serine 87, serine 94, and serine 96.

Belongs to the small Tim family. As to quaternary structure, heterohexamer; composed of 3 copies of TIMM8A and 3 copies of TIMM13, named soluble 70 kDa complex. Associates with the TIM22 complex, whose core is composed of TIMM22.

The protein resides in the mitochondrion inner membrane. Its function is as follows. Mitochondrial intermembrane chaperone that participates in the import and insertion of some multi-pass transmembrane proteins into the mitochondrial inner membrane. Also required for the transfer of beta-barrel precursors from the TOM complex to the sorting and assembly machinery (SAM complex) of the outer membrane. Acts as a chaperone-like protein that protects the hydrophobic precursors from aggregation and guide them through the mitochondrial intermembrane space. The TIMM8-TIMM13 complex mediates the import of proteins such as TIMM23, SLC25A12/ARALAR1 and SLC25A13/ARALAR2, while the predominant TIMM9-TIMM10 70 kDa complex mediates the import of much more proteins. In Rattus norvegicus (Rat), this protein is Mitochondrial import inner membrane translocase subunit Tim8 A (Timm8a).